The primary structure comprises 494 residues: Acetyl-coenzyme A carboxylase carboxyl transferase subunit beta, chloroplastic (494 aa).

The region spanning 226 to 494 is the CoA carboxyltransferase N-terminal domain; it reads LWVQCENCYG…VPLNQNETEH (269 aa). C230, C233, C249, and C252 together coordinate Zn(2+). A C4-type zinc finger spans residues 230–252; it reads CENCYGLNYKKFLKSKMNICEQC.

This sequence belongs to the AccD/PCCB family. As to quaternary structure, acetyl-CoA carboxylase is a heterohexamer composed of biotin carboxyl carrier protein, biotin carboxylase and 2 subunits each of ACCase subunit alpha and ACCase plastid-coded subunit beta (accD). The cofactor is Zn(2+).

The protein resides in the plastid. The protein localises to the chloroplast stroma. The enzyme catalyses N(6)-carboxybiotinyl-L-lysyl-[protein] + acetyl-CoA = N(6)-biotinyl-L-lysyl-[protein] + malonyl-CoA. It participates in lipid metabolism; malonyl-CoA biosynthesis; malonyl-CoA from acetyl-CoA: step 1/1. Component of the acetyl coenzyme A carboxylase (ACC) complex. Biotin carboxylase (BC) catalyzes the carboxylation of biotin on its carrier protein (BCCP) and then the CO(2) group is transferred by the transcarboxylase to acetyl-CoA to form malonyl-CoA. In Coffea arabica (Arabian coffee), this protein is Acetyl-coenzyme A carboxylase carboxyl transferase subunit beta, chloroplastic.